The chain runs to 247 residues: Adenosylcobinamide-GDP ribazoletransferase (247 aa).

Helical transmembrane passes span 31–51 (VVWF…AAAL), 57–77 (PWLG…GLHL), 109–129 (FGVI…HWLL), 136–156 (PALV…TLLL), 189–209 (ITPI…WMWL), and 218–238 (ILGA…GVSL).

The protein belongs to the CobS family. Mg(2+) serves as cofactor.

It localises to the cell inner membrane. It catalyses the reaction alpha-ribazole + adenosylcob(III)inamide-GDP = adenosylcob(III)alamin + GMP + H(+). The catalysed reaction is alpha-ribazole 5'-phosphate + adenosylcob(III)inamide-GDP = adenosylcob(III)alamin 5'-phosphate + GMP + H(+). It participates in cofactor biosynthesis; adenosylcobalamin biosynthesis; adenosylcobalamin from cob(II)yrinate a,c-diamide: step 7/7. Functionally, joins adenosylcobinamide-GDP and alpha-ribazole to generate adenosylcobalamin (Ado-cobalamin). Also synthesizes adenosylcobalamin 5'-phosphate from adenosylcobinamide-GDP and alpha-ribazole 5'-phosphate. This chain is Adenosylcobinamide-GDP ribazoletransferase, found in Thiobacillus denitrificans (strain ATCC 25259 / T1).